Here is a 133-residue protein sequence, read N- to C-terminus: Salmonella pathogenicity island 2 protein C (133 aa).

In terms of assembly, interacts with the mammalian NIPSNAP3A and HOOK3 proteins in infected cells.

The protein resides in the secreted. The protein localises to the cytoplasm. In terms of biological role, virulence protein that plays a central role in mammalian macrophage infection, by inhibiting phagosome-lysosome fusion and cellular trafficking, including trafficking of organelles that are devoid of Salmonella. May act by disrupting the function of the mammalian HOOK3 protein, a protein involved in the cellular traffic. Also required for actin ADP-ribosylase SpvB activity. In Salmonella typhimurium (strain 14028s / SGSC 2262), this protein is Salmonella pathogenicity island 2 protein C (spiC).